A 225-amino-acid chain; its full sequence is UPF0758 protein NMC1174 (225 aa).

Residues 102 to 224 (VLSDPDTVAD…VRSFRQLGLM (123 aa)) enclose the MPN domain. Residues His-173, His-175, and Asp-186 each contribute to the Zn(2+) site. The short motif at 173-186 (HNHPGGSPEPSQED) is the JAMM motif element.

Belongs to the UPF0758 family.

This chain is UPF0758 protein NMC1174, found in Neisseria meningitidis serogroup C / serotype 2a (strain ATCC 700532 / DSM 15464 / FAM18).